The following is a 235-amino-acid chain: Orotidine 5'-phosphate decarboxylase (235 aa).

Residues Asp12, Lys34, 61-70 (DMKLLDIDNT), Thr116, Arg177, Gln186, and Arg207 each bind substrate. Lys63 acts as the Proton donor in catalysis.

The protein belongs to the OMP decarboxylase family. Type 1 subfamily. Homodimer.

The enzyme catalyses orotidine 5'-phosphate + H(+) = UMP + CO2. It functions in the pathway pyrimidine metabolism; UMP biosynthesis via de novo pathway; UMP from orotate: step 2/2. Functionally, catalyzes the decarboxylation of orotidine 5'-monophosphate (OMP) to uridine 5'-monophosphate (UMP). The protein is Orotidine 5'-phosphate decarboxylase of Rhizobium etli (strain CIAT 652).